The sequence spans 465 residues: Exoenzymes regulatory protein AepA (465 aa).

A signal peptide spans Met1 to Ala21.

It belongs to the metallo-dependent hydrolases superfamily.

In terms of biological role, involved in the control of extracellular enzymes production. Stimulates PEL, PEH, CEL, and PRT production. The chain is Exoenzymes regulatory protein AepA (aepA) from Pectobacterium carotovorum subsp. carotovorum (Erwinia carotovora subsp. carotovora).